Reading from the N-terminus, the 364-residue chain is Dihydroorotate dehydrogenase (quinone) (364 aa).

FMN is bound by residues 61-65 (AGFDK) and Thr-85. Substrate is bound at residue Lys-65. Residue 110–114 (NRMGF) coordinates substrate. Residues Asn-139 and Asn-170 each coordinate FMN. Residue Asn-170 coordinates substrate. Residue Ser-173 is the Nucleophile of the active site. Position 175 (Asn-175) interacts with substrate. Residues Lys-214 and Ala-242 each contribute to the FMN site. 243 to 244 (NT) is a substrate binding site. FMN contacts are provided by residues Gly-266, Gly-295, and 316–317 (YS).

This sequence belongs to the dihydroorotate dehydrogenase family. Type 2 subfamily. Monomer. The cofactor is FMN.

It localises to the cell membrane. The enzyme catalyses (S)-dihydroorotate + a quinone = orotate + a quinol. It functions in the pathway pyrimidine metabolism; UMP biosynthesis via de novo pathway; orotate from (S)-dihydroorotate (quinone route): step 1/1. In terms of biological role, catalyzes the conversion of dihydroorotate to orotate with quinone as electron acceptor. The protein is Dihydroorotate dehydrogenase (quinone) of Rhodopseudomonas palustris (strain BisB5).